Here is a 397-residue protein sequence, read N- to C-terminus: Succinate--CoA ligase [ADP-forming] subunit beta (397 aa).

The 246-residue stretch at 9-254 (KALLKSFGAP…TTEEDEKEIE (246 aa)) folds into the ATP-grasp domain. ATP-binding positions include Lys-46, 53–55 (GRG), Glu-109, Ala-112, and Glu-117. The Mg(2+) site is built by Asn-209 and Asp-223. Substrate contacts are provided by residues Asn-274 and 331-333 (GIM).

The protein belongs to the succinate/malate CoA ligase beta subunit family. As to quaternary structure, heterotetramer of two alpha and two beta subunits. The cofactor is Mg(2+).

The enzyme catalyses succinate + ATP + CoA = succinyl-CoA + ADP + phosphate. The catalysed reaction is GTP + succinate + CoA = succinyl-CoA + GDP + phosphate. It participates in carbohydrate metabolism; tricarboxylic acid cycle; succinate from succinyl-CoA (ligase route): step 1/1. Its function is as follows. Succinyl-CoA synthetase functions in the citric acid cycle (TCA), coupling the hydrolysis of succinyl-CoA to the synthesis of either ATP or GTP and thus represents the only step of substrate-level phosphorylation in the TCA. The beta subunit provides nucleotide specificity of the enzyme and binds the substrate succinate, while the binding sites for coenzyme A and phosphate are found in the alpha subunit. This chain is Succinate--CoA ligase [ADP-forming] subunit beta, found in Mesorhizobium japonicum (strain LMG 29417 / CECT 9101 / MAFF 303099) (Mesorhizobium loti (strain MAFF 303099)).